We begin with the raw amino-acid sequence, 426 residues long: Chromatin structure-remodeling complex subunit SFH1 (426 aa).

A Phosphoserine modification is found at serine 78. Residues 201-242 (AIMIPITLDIEHMGHTIKDQFLWNYNDDSISPEEFASIYCKD) are interaction with STH1.

This sequence belongs to the SNF5 family. As to quaternary structure, interacts directly with STH1. Component of the two forms of the RSC complex composed of at least either RSC1 or RSC2, and ARP7, ARP9, LDB7, NPL6, RSC3, RSC30, RSC4, RSC58, RSC6, RSC8, RSC9, SFH1, STH1, HTL1 and probably RTT102. The complexes interact with histone and histone variant components of centromeric chromatin. In terms of processing, phosphorylated in the G1 phase.

The protein localises to the nucleus. In terms of biological role, component of the chromatin structure-remodeling complex (RSC), which is involved in transcription regulation and nucleosome positioning. RSC is responsible for the transfer of a histone octamer from a nucleosome core particle to naked DNA. The reaction requires ATP and involves an activated RSC-nucleosome intermediate. Remodeling reaction also involves DNA translocation, DNA twist and conformational change. As a reconfigurer of centromeric and flanking nucleosomes, RSC complex is required both for proper kinetochore function in chromosome segregation and, via a PKC1-dependent signaling pathway, for organization of the cellular cytoskeleton. This subunit is essential for mitotic growth and required for cell cycle progression. This is Chromatin structure-remodeling complex subunit SFH1 (SFH1) from Saccharomyces cerevisiae (strain ATCC 204508 / S288c) (Baker's yeast).